Reading from the N-terminus, the 81-residue chain is Sec-independent protein translocase protein TatA (81 aa).

Residues 1–21 (MGGISIWQLLIVALIVILLFG) traverse the membrane as a helical segment. The segment at 34-81 (GAVKGFKNAMTPEDENKSLDDKEKDQTAATSQQAAEKQPETESKDKQA) is disordered. Basic and acidic residues-rich tracts occupy residues 47–59 (DENK…EKDQ) and 70–81 (KQPETESKDKQA).

The protein belongs to the TatA/E family. In terms of assembly, the Tat system comprises two distinct complexes: a TatABC complex, containing multiple copies of TatA, TatB and TatC subunits, and a separate TatA complex, containing only TatA subunits. Substrates initially bind to the TatABC complex, which probably triggers association of the separate TatA complex to form the active translocon.

The protein resides in the cell inner membrane. Part of the twin-arginine translocation (Tat) system that transports large folded proteins containing a characteristic twin-arginine motif in their signal peptide across membranes. TatA could form the protein-conducting channel of the Tat system. The sequence is that of Sec-independent protein translocase protein TatA from Shewanella frigidimarina (strain NCIMB 400).